Reading from the N-terminus, the 518-residue chain is Circadian clock oscillator protein KaiC (518 aa).

A KaiC 1 domain is found at 1 to 247 (MTNLPEHQSS…FTINNGINIF (247 aa)). Ser49, Gly50, Thr51, Gly52, Lys53, Thr54, and Leu55 together coordinate ATP. Thr54 is a Mg(2+) binding site. Glu78 serves as the catalytic Proton acceptor in CI (KaiC 1). Ser90 lines the ATP pocket. The tract at residues 116-123 (QEVAGDFD) is B-loop, required to bind KaiB and SasA. Residues Lys225, Leu226, Arg227, Thr229, and His231 each coordinate ATP. Residues 248 to 260 (PLGAMRLTQRSSN) form a linker region. In terms of domain architecture, KaiC 2 spans 261–518 (VRVSSGVKTL…AKGMQDLESE (258 aa)). ATP-binding residues include Thr290, Gly291, Thr292, Gly293, Lys294, Thr295, and Leu296. Thr295 provides a ligand contact to Mg(2+). Residue Glu318 participates in Mg(2+) binding. Catalysis depends on Glu318, which acts as the Proton acceptor in CII (KaiC 2). Residue Trp331 coordinates ATP. Ser431 is modified (phosphoserine; by autocatalysis). The residue at position 432 (Thr432) is a Phosphothreonine; by autocatalysis. Arg451, Lys457, Met458, Arg459, Ser461, His463, and Lys465 together coordinate ATP. The A-loop, interacts with KaiA stretch occupies residues 488 to 497 (GIISGTPTRI).

The protein belongs to the KaiC family. Homohexamer resembling 2 stacked donuts rings with a central pore nearly blocked on one side; hexamerization is dependent on ATP-binding. Binds 2 ATP per monomer, at the subunit interface on each ring. The KaiABC complex composition changes during the circadian cycle to control KaiC phosphorylation. Complexes KaiC(6), KaiA(2-4):KaiC(6), KaiB(6):KaiC(6) and KaiC(6):KaiB(6):KaiA(12) are among the most important forms, many form cooperatively. Interacts with SasA, probably as 1 SasA trimer:1 KaiC homohexamer, has highest affinity for unphosphorylated SasA. The CI domain binds to KaiB and SasA; as they have a similar fold they compete for the same site on CI. KaiB assumes a thioredoxin-like form called KaiB(fs) when bound to KaiC. It depends on Mg(2+) as a cofactor. Post-translationally, phosphorylated on serine/threonine residues by autocatalysis. Both phosphorylated and unphosphorylated forms exist. Both autophosphorylates and autodephosphorylates. Phosphorylated form correlates with clock speed. In terms of processing, phosphorylated on serine and threonine residues by autocatalysis. Has a 4 step phosphorylation cycle; the autokinase acts first on Thr-432, then Ser-431. When Ser-431 is modified KaiC switches to an autophosphatase mode, acting first on phospho-Thr-432 then phospho-Ser-431.

The catalysed reaction is L-seryl-[protein] + ATP = O-phospho-L-seryl-[protein] + ADP + H(+). It catalyses the reaction L-threonyl-[protein] + ATP = O-phospho-L-threonyl-[protein] + ADP + H(+). The enzyme catalyses ATP + H2O = ADP + phosphate + H(+). Its activity is regulated as follows. The interaction with KaiA enhances its phosphorylation status, while the interaction with KaiB decreases it. Functionally, central component of the KaiABC oscillator complex, which constitutes the main circadian regulator in cyanobacteria. Complex composition changes during the circadian cycle to control KaiC phosphorylation. KaiA stimulates KaiC autophosphorylation, while KaiB sequesters KaiA, leading to KaiC autodephosphorylation. Clock output pathways impact the RpaA transcriptional regulator. KaiC enhances the autophosphorylation activity of SasA, which then transfers its phosphate group to RpaA to activate it. KaiB and KaiC together enhance the phospho-RpaA dephosphatase activity of CikA. Its function is as follows. Stimulates SasA autophosphorylation. Fully phosphorylated KaiC (tested with phosphomimetic Asp-431-432-Asp) is the best stimulant, requires the ATPase activity of the CII domain. Unphosphorylated SasA associates with KaiC and its autophosphorylation activity is enhanced. Phospho-SasA is released and associates with RpaA, transferring its phosphate group. Formation of the KaiA:KaiB complex is promoted by KaiC, helping switch KaiC from its autophosphorylation to autodephosphatase function. In terms of biological role, has a weak, temperature-independent ATPase activity (about 14 molecules of ATP per day) that defines the circadian period. ATPase activity is mostly contributed by the CI domain; the CII domain augments the activity. The addition of KaiA increases activity. ATPase is inhibited during the KaiC phosphorylating phase and activated during the KaiC dephosphorylating phase. This is Circadian clock oscillator protein KaiC from Thermosynechococcus vestitus (strain NIES-2133 / IAM M-273 / BP-1).